Here is a 780-residue protein sequence, read N- to C-terminus: Myosin heavy chain kinase C (780 aa).

Positions 40-243 (IGDDLKPKWT…VCDFLKLKPI (204 aa)) constitute an Alpha-type protein kinase domain. Residues 310 to 495 (RIRAQQQQKS…MEQTPDRSEF (186 aa)) are disordered. Low complexity predominate over residues 337–350 (QQSPSSPTSKPVPQ). Polar residues predominate over residues 353–376 (KTPSQSNVVNKSPVSPPKENSNVK). Residues 380-436 (DNINNNNSSISSNNDNSNNNNNNNDNINNSSNSSSVNSNSSSVSSSSSSSSSSSSSS) are compositionally biased toward low complexity. A compositionally biased stretch (polar residues) spans 437–450 (TTNAAPISIQVSRN). A compositionally biased stretch (low complexity) spans 458–488 (IQPSSAAASASSTSSSNVPTPESTSTSSMEQ). 6 WD repeats span residues 507–546 (DTVRGLQSECITGDSLRLYSGSNDGQIGVWDAVELKHVTN), 549–589 (AHGK…TIKE), 591–628 (KESNEVNTIFIQDNLLYTGCNDKTVKVWDMRSYECVKT), 631–668 (GHTRAIKSVCAMGNLLFSGSNDQQIYVWNLATGTILTN), 671–708 (GHEGWVKTLYAHNNMLYSGSHDETIRIWDLKTTRCVNT), and 748–780 (NTRSSILCLWRNQNQLFTGSLASNLKVWSWDKM).

It belongs to the protein kinase superfamily. Alpha-type protein kinase family. ALPK subfamily. In terms of assembly, interacts with myosin II heavy chain (mhcA). Post-translationally, autophosphorylated in vitro.

The protein resides in the cytoplasm. It localises to the cell cortex. Its subcellular location is the membrane. The protein localises to the cleavage furrow. It catalyses the reaction L-threonyl-[myosin heavy-chain] + ATP = O-phospho-L-threonyl-[myosin heavy-chain] + ADP + H(+). Phosphorylates threonine at 'Thr-1823', 'Thr-1833' and 'Thr-2029' in the C-terminal tail region of myosin II heavy chain (mhcA). This phosphorylation is critical in actin-activated ATPase activity of the myosin and regulating the assembly and disassembly of myosin II filament. In vitro, catalytic domain phosphorylates mhcA, myelin basic protein, myosin regulatory light chain, casein and caldesmon. Drives the disassembly of myosin II filaments for efficient cytokinesis and recycling of myosin II that occurs during late cytokinesis. Can be activated in vitro by autophosphorylation. This is Myosin heavy chain kinase C (mhkC) from Dictyostelium discoideum (Social amoeba).